We begin with the raw amino-acid sequence, 231 residues long: Ribose-5-phosphate isomerase A (231 aa).

Substrate is bound by residues 28–31 (TGST), 83–86 (DGAD), and 96–99 (KGGG). Glu-105 serves as the catalytic Proton acceptor. Lys-123 is a substrate binding site.

The protein belongs to the ribose 5-phosphate isomerase family. As to quaternary structure, homodimer.

The enzyme catalyses aldehydo-D-ribose 5-phosphate = D-ribulose 5-phosphate. It participates in carbohydrate degradation; pentose phosphate pathway; D-ribose 5-phosphate from D-ribulose 5-phosphate (non-oxidative stage): step 1/1. In terms of biological role, catalyzes the reversible conversion of ribose-5-phosphate to ribulose 5-phosphate. The chain is Ribose-5-phosphate isomerase A from Rhizobium meliloti (strain 1021) (Ensifer meliloti).